A 45-amino-acid polypeptide reads, in one-letter code: Photosystem II reaction center protein K (45 aa).

Positions 1–8 are excised as a propeptide; it reads MTQIFLIG. Residues 20-40 traverse the membrane as a helical segment; sequence IVDVLPIIPVLFLLLAFVWQA.

Belongs to the PsbK family. PSII is composed of 1 copy each of membrane proteins PsbA, PsbB, PsbC, PsbD, PsbE, PsbF, PsbH, PsbI, PsbJ, PsbK, PsbL, PsbM, PsbT, PsbX, PsbY, PsbZ, Psb30/Ycf12, at least 3 peripheral proteins of the oxygen-evolving complex and a large number of cofactors. It forms dimeric complexes.

It is found in the plastid. The protein localises to the chloroplast thylakoid membrane. One of the components of the core complex of photosystem II (PSII). PSII is a light-driven water:plastoquinone oxidoreductase that uses light energy to abstract electrons from H(2)O, generating O(2) and a proton gradient subsequently used for ATP formation. It consists of a core antenna complex that captures photons, and an electron transfer chain that converts photonic excitation into a charge separation. The sequence is that of Photosystem II reaction center protein K from Ostreococcus tauri.